A 252-amino-acid polypeptide reads, in one-letter code: Uracil-DNA glycosylase (252 aa).

Aspartate 87 acts as the Proton acceptor in catalysis.

The protein belongs to the uracil-DNA glycosylase (UDG) superfamily. UNG family.

Its subcellular location is the host nucleus. It catalyses the reaction Hydrolyzes single-stranded DNA or mismatched double-stranded DNA and polynucleotides, releasing free uracil.. Functionally, excises uracil residues from the DNA which can arise as a result of misincorporation of dUMP residues by DNA polymerase or deamination of cytosines. Therefore may reduce deleterious uracil incorporation into the viral genome, particularly in terminally differentiated cells which lack DNA repair enzymes. The polypeptide is Uracil-DNA glycosylase (46) (Alcelaphine herpesvirus 1 (strain C500) (AlHV-1)).